A 211-amino-acid chain; its full sequence is MSVPQIQVEEVAGGEEGPAGTTPPPDDHLRSLKALTEKLRLETRRPSYLEWQARLEEQTWPFPRPAAEPRGSGEEEPSLLRTRALRPHPPPNGRANQDDGHPPTGKLEGFESIDEAIAWLRKELMEMRLQDQQLARQLMRLRSDIHKLKIEQTCDLHRRMLNDATYELEERDELSDLFCDAPLASSFSLSAPLKLIGVTKMNINSRRFSLC.

Disordered regions lie at residues 1–30 and 56–108; these read MSVP…DHLR and EEQT…GKLE. Positions 120-153 form a coiled coil; sequence LRKELMEMRLQDQQLARQLMRLRSDIHKLKIEQT.

Belongs to the FAM167 (SEC) family.

In Bos taurus (Bovine), this protein is Protein FAM167A (FAM167A).